The primary structure comprises 87 residues: Small ribosomal subunit protein uS17 (87 aa).

The protein belongs to the universal ribosomal protein uS17 family. As to quaternary structure, part of the 30S ribosomal subunit.

In terms of biological role, one of the primary rRNA binding proteins, it binds specifically to the 5'-end of 16S ribosomal RNA. The protein is Small ribosomal subunit protein uS17 of Syntrophobacter fumaroxidans (strain DSM 10017 / MPOB).